The chain runs to 358 residues: Probable dual-specificity RNA methyltransferase RlmN 2 (358 aa).

Residue Glu90 is the Proton acceptor of the active site. Residues Ser96–Asp328 enclose the Radical SAM core domain. Cys103 and Cys334 are oxidised to a cystine. Residues Cys110, Cys114, and Cys117 each coordinate [4Fe-4S] cluster. Residues Gly160–Glu161, Ser192, Ser215–His217, and Asn291 contribute to the S-adenosyl-L-methionine site. The S-methylcysteine intermediate role is filled by Cys334.

It belongs to the radical SAM superfamily. RlmN family. The cofactor is [4Fe-4S] cluster.

It is found in the cytoplasm. The catalysed reaction is adenosine(2503) in 23S rRNA + 2 reduced [2Fe-2S]-[ferredoxin] + 2 S-adenosyl-L-methionine = 2-methyladenosine(2503) in 23S rRNA + 5'-deoxyadenosine + L-methionine + 2 oxidized [2Fe-2S]-[ferredoxin] + S-adenosyl-L-homocysteine. The enzyme catalyses adenosine(37) in tRNA + 2 reduced [2Fe-2S]-[ferredoxin] + 2 S-adenosyl-L-methionine = 2-methyladenosine(37) in tRNA + 5'-deoxyadenosine + L-methionine + 2 oxidized [2Fe-2S]-[ferredoxin] + S-adenosyl-L-homocysteine. In terms of biological role, specifically methylates position 2 of adenine 2503 in 23S rRNA and position 2 of adenine 37 in tRNAs. This Protochlamydia amoebophila (strain UWE25) protein is Probable dual-specificity RNA methyltransferase RlmN 2.